Here is a 125-residue protein sequence, read N- to C-terminus: Large ribosomal subunit protein bL12 (125 aa).

Belongs to the bacterial ribosomal protein bL12 family. Homodimer. Part of the ribosomal stalk of the 50S ribosomal subunit. Forms a multimeric L10(L12)X complex, where L10 forms an elongated spine to which 2 to 4 L12 dimers bind in a sequential fashion. Binds GTP-bound translation factors.

Forms part of the ribosomal stalk which helps the ribosome interact with GTP-bound translation factors. Is thus essential for accurate translation. The polypeptide is Large ribosomal subunit protein bL12 (Sinorhizobium medicae (strain WSM419) (Ensifer medicae)).